Reading from the N-terminus, the 501-residue chain is MTTAQAAESQNPYLEGFLAPVSTEVTATDLPVTGRIPEHLDGRYLRNGPNPVAEVDPATYHWFTGDAMVHGVALRDGKARWYRNRWVRTPAVCAALGEPISARPHPRTGIIEGGPNTNVLTHAGRTLALVEAGVVNYELTDELDTVGPCDFDGTLHGGYTAHPQRDPHTGELHAVSYSFARGHRVQYSVIGTDGHARRTVDIEVAGSPMMHSFSLTDNYVVIYDLPVTFDPMQVVPASVPRWLQRPARLVIQSVLGRVRIPDPIAALGNRMQGHSDRLPYAWNPSYPARVGVMPREGGNEDVRWFDIEPCYVYHPLNAYSECRNGAEVLVLDVVRYSRMFDRDRRGPGGDSRPSLDRWTINLATGAVTAECRDDRAQEFPRINETLVGGPHRFAYTVGIEGGFLVGAGAALSTPLYKQDCVTGSSTVASLDPDLLIGEMVFVPNPSARAEDDGILMGYGWHRGRDEGQLLLLDAQTLESIATVHLPQRVPMGFHGNWAPTT.

Fe cation-binding residues include His162, His211, His314, and His494.

Belongs to the carotenoid oxygenase family. The cofactor is Fe(2+).

Its function is as follows. Catalyzes the oxidative cleavage of several carotenoids and apocarotenoids in vitro. The protein is Carotenoid cleavage oxygenase of Mycobacterium tuberculosis (strain CDC 1551 / Oshkosh).